We begin with the raw amino-acid sequence, 394 residues long: Elongation factor Tu (394 aa).

Residues K10–Q204 enclose the tr-type G domain. Positions G19 to T26 are G1. A GTP-binding site is contributed by G19–T26. T26 contacts Mg(2+). The interval G60–N64 is G2. A G3 region spans residues D81–G84. Residues D81–H85 and N136–D139 each bind GTP. The tract at residues N136 to D139 is G4. Positions S174–L176 are G5.

It belongs to the TRAFAC class translation factor GTPase superfamily. Classic translation factor GTPase family. EF-Tu/EF-1A subfamily. Monomer.

The protein localises to the cytoplasm. It carries out the reaction GTP + H2O = GDP + phosphate + H(+). Its function is as follows. GTP hydrolase that promotes the GTP-dependent binding of aminoacyl-tRNA to the A-site of ribosomes during protein biosynthesis. This Shewanella putrefaciens (Pseudomonas putrefaciens) protein is Elongation factor Tu.